The primary structure comprises 199 residues: Crossover junction endodeoxyribonuclease RuvC (199 aa).

Active-site residues include Asp7, Glu68, and Asp141. The Mg(2+) site is built by Asp7, Glu68, and Asp141.

The protein belongs to the RuvC family. As to quaternary structure, homodimer which binds Holliday junction (HJ) DNA. The HJ becomes 2-fold symmetrical on binding to RuvC with unstacked arms; it has a different conformation from HJ DNA in complex with RuvA. In the full resolvosome a probable DNA-RuvA(4)-RuvB(12)-RuvC(2) complex forms which resolves the HJ. Mg(2+) is required as a cofactor.

The protein localises to the cytoplasm. It carries out the reaction Endonucleolytic cleavage at a junction such as a reciprocal single-stranded crossover between two homologous DNA duplexes (Holliday junction).. In terms of biological role, the RuvA-RuvB-RuvC complex processes Holliday junction (HJ) DNA during genetic recombination and DNA repair. Endonuclease that resolves HJ intermediates. Cleaves cruciform DNA by making single-stranded nicks across the HJ at symmetrical positions within the homologous arms, yielding a 5'-phosphate and a 3'-hydroxyl group; requires a central core of homology in the junction. The consensus cleavage sequence is 5'-(A/T)TT(C/G)-3'. Cleavage occurs on the 3'-side of the TT dinucleotide at the point of strand exchange. HJ branch migration catalyzed by RuvA-RuvB allows RuvC to scan DNA until it finds its consensus sequence, where it cleaves and resolves the cruciform DNA. This chain is Crossover junction endodeoxyribonuclease RuvC, found in Saccharopolyspora erythraea (strain ATCC 11635 / DSM 40517 / JCM 4748 / NBRC 13426 / NCIMB 8594 / NRRL 2338).